We begin with the raw amino-acid sequence, 176 residues long: Telomerase RNA component interacting RNase (176 aa).

A compositionally biased stretch (basic and acidic residues) spans 1–12 (MAARGRRAEPQG). The segment at 1–121 (MAARGRRAEP…TLSFVGKRRG (121 aa)) is disordered. Residues 45 to 56 (SGAGSSPVSGGV) show a composition bias toward low complexity. Residues 68-83 (LFKRKMEEEQRQRQEE) are compositionally biased toward basic and acidic residues. The segment covering 90–101 (RPDQSAAAAGPG) has biased composition (low complexity). Residue Lys146 is modified to N6-acetyllysine.

Part of the telomerase RNA 3' end complex which contains about 488 proteins.

Its activity is regulated as follows. Zn(2+) inhibits the RNase activity while Mg(2+), Ca(2+), Mn(2+), K(+), Na(+), EDTA and EGTA show little effect on the exoribonuclease activity. Functionally, exoribonuclease that is part of the telomerase RNA 3' end processing complex and which has the ability to cleave all four unpaired RNA nucleotides from the 5' end or 3' end with higher efficiency for purine bases. The sequence is that of Telomerase RNA component interacting RNase from Homo sapiens (Human).